The sequence spans 116 residues: UPF0102 protein IL0423 (116 aa).

The protein belongs to the UPF0102 family.

This chain is UPF0102 protein IL0423, found in Idiomarina loihiensis (strain ATCC BAA-735 / DSM 15497 / L2-TR).